Reading from the N-terminus, the 359-residue chain is Tropomodulin-1 (359 aa).

Positions 36-61 (ELDPDNALLPAGLRQKDQTTKAPTGP) are disordered. Residues 39-138 (PDNALLPAGL…CDIAAILGMH (100 aa)) are tropomyosin-binding.

This sequence belongs to the tropomodulin family. As to quaternary structure, binds to the N-terminus of tropomyosin and to actin. Interacts with FLII. Highly expressed in the erythrocyte, heart and skeletal muscle.

The protein localises to the cytoplasm. It localises to the cytoskeleton. Its function is as follows. Blocks the elongation and depolymerization of the actin filaments at the pointed end. The Tmod/TM complex contributes to the formation of the short actin protofilament, which in turn defines the geometry of the membrane skeleton. In Mus musculus (Mouse), this protein is Tropomodulin-1 (Tmod1).